A 185-amino-acid chain; its full sequence is Keratin-associated protein 4-8 (185 aa).

25 repeat units span residues 14 to 18 (GCGQD), 19 to 23 (LCQET), 24 to 28 (CCCPS), 39 to 43 (CYRPS), 44 to 48 (YSVSC), 49 to 53 (CCRPQ), 54 to 58 (CCQSV), 59 to 63 (CCQPT), 64 to 68 (CCRPS), 69 to 73 (CCVSS), 74 to 78 (CCKPQ), 79 to 83 (CCQSV), 84 to 88 (CCQPT), 89 to 93 (CCHPS), 94 to 98 (CCISS), 99 to 103 (CCRPS), 104 to 108 (CCVSS), 109 to 113 (CCKPQ), 114 to 118 (CCQSV), 119 to 123 (CCQPN), 124 to 128 (CCRPS), 134 to 138 (CCRPS), 139 to 143 (CCESS), 144 to 148 (CCRPC), and 149 to 164 (CCLR…HTTC). The segment at 14-164 (GCGQDLCQET…CGRVSCHTTC (151 aa)) is 25 X 5 AA repeats of C-C-[IKRQVHEC]-[SPRT]-[STCVQPR].

The protein belongs to the KRTAP type 4 family. As to quaternary structure, interacts with hair keratins. Expressed in the hair follicles.

In terms of biological role, in the hair cortex, hair keratin intermediate filaments are embedded in an interfilamentous matrix, consisting of hair keratin-associated proteins (KRTAP), which are essential for the formation of a rigid and resistant hair shaft through their extensive disulfide bond cross-linking with abundant cysteine residues of hair keratins. The matrix proteins include the high-sulfur and high-glycine-tyrosine keratins. This Homo sapiens (Human) protein is Keratin-associated protein 4-8 (KRTAP4-8).